The primary structure comprises 459 residues: Chaperone SurA (459 aa).

A signal peptide spans 1 to 23; sequence MNHRLVALSVASLALLAPLTVPA. PpiC domains lie at 197–301 and 312–411; these read VQQI…KVLE and VTQS…QLME.

Its subcellular location is the periplasm. It catalyses the reaction [protein]-peptidylproline (omega=180) = [protein]-peptidylproline (omega=0). In terms of biological role, chaperone involved in the correct folding and assembly of outer membrane proteins. Recognizes specific patterns of aromatic residues and the orientation of their side chains, which are found more frequently in integral outer membrane proteins. May act in both early periplasmic and late outer membrane-associated steps of protein maturation. The chain is Chaperone SurA from Albidiferax ferrireducens (strain ATCC BAA-621 / DSM 15236 / T118) (Rhodoferax ferrireducens).